We begin with the raw amino-acid sequence, 398 residues long: tRNA(Ile)-lysidine synthase (398 aa).

25–30 (SGGVDS) lines the ATP pocket.

The protein belongs to the tRNA(Ile)-lysidine synthase family.

It localises to the cytoplasm. The catalysed reaction is cytidine(34) in tRNA(Ile2) + L-lysine + ATP = lysidine(34) in tRNA(Ile2) + AMP + diphosphate + H(+). Functionally, ligates lysine onto the cytidine present at position 34 of the AUA codon-specific tRNA(Ile) that contains the anticodon CAU, in an ATP-dependent manner. Cytidine is converted to lysidine, thus changing the amino acid specificity of the tRNA from methionine to isoleucine. The protein is tRNA(Ile)-lysidine synthase of Francisella tularensis subsp. holarctica (strain OSU18).